Here is an 830-residue protein sequence, read N- to C-terminus: FYN-binding protein 1 (830 aa).

The tract at residues 1–501 is disordered; sequence MDGKTDVKSL…REKKEQELRK (501 aa). Lysine 13 bears the N6-acetyllysine mark. A compositionally biased stretch (polar residues) spans 15 to 55; that stretch reads NTGSNPTEEVSTSSRPFKVAGQNSPSGIQSKKNLFDNQGNA. A phosphoserine mark is found at serine 38 and serine 56. Residues 79–89 show a composition bias toward basic and acidic residues; sequence TYEEKSEKEPK. Serine 233 bears the Phosphoserine mark. Basic and acidic residues-rich tracts occupy residues 248-259 and 284-296; these read PAKEDPEDKDHG and NSEEKKEERKTDI. The residue at position 329 (serine 329) is a Phosphoserine. A compositionally biased stretch (basic and acidic residues) spans 330 to 339; that stretch reads QEKEGDKDSA. Pro residues-rich tracts occupy residues 344–362 and 391–407; these read KPLPPLSVLGPPPSKPSRP and LPPPPPTQPASQPPLPA. An interaction with SKAP1 region spans residues 347–447; it reads PPLSVLGPPP…QDGVMHSDGT (101 aa). A compositionally biased stretch (acidic residues) spans 450–464; that stretch reads LEEEQESDGEMYEDI. Serine 456 bears the Phosphoserine mark. Positions 461-464 match the SH2-binding motif; sequence YEDI. The segment covering 465 to 500 has biased composition (basic and acidic residues); the sequence is ESSKERDKKREKEEKKRLELERKEQKEREKKEQELR. The stretch at 465-502 forms a coiled coil; it reads ESSKERDKKREKEEKKRLELERKEQKEREKKEQELRKK. The short motif at 479-486 is the Nuclear localization signal element; it reads KKRLELER. Positions 510–571 constitute an SH3 1 domain; sequence QVIHHAKACC…KTTAVKIDYD (62 aa). At tyrosine 570 the chain carries Phosphotyrosine. Residue serine 572 is modified to Phosphoserine. The SH2-binding; to LCP2 motif lies at 595–598; that stretch reads YDDV. Disordered stretches follow at residues 601-646 and 660-739; these read QDAP…DEKT and KDER…EKEE. Acidic residues predominate over residues 621–636; the sequence is ADDDIYDGIEEEDADD. The SH2-binding; to FYN signature appears at 626-629; the sequence is YDGI. The segment covering 660–675 has biased composition (basic and acidic residues); it reads KDERKKSIREKPKVSE. The segment covering 693 to 703 has biased composition (acidic residues); the sequence is VGEEVYDDVDA. Tyrosine 698 is subject to Phosphotyrosine. A compositionally biased stretch (basic and acidic residues) spans 722-739; sequence TKAEEKDPKKLKKQEKEE. The Nuclear localization signal signature appears at 732–739; it reads LKKQEKEE. In terms of domain architecture, SH3 2 spans 747-815; that stretch reads KYDGEIRVLY…LRSYLVDNDG (69 aa).

In terms of assembly, part of a complex consisting of SKAP2, FYB1 and PTPNS1. Part of a complex consisting of SKAP2, FYB1 and LILRB3. Part of a complex consisting of SKAP1, FYB1 and CLNK. Interacts with CLNK (via its SH2 domain) and FYN; this interaction allows SKAP1 and FYB1 to recruit FYN to the complex, thus promoting the phosphorylation of CLNK by FYN. Interacts with FYN. Interacts with LCP2. Interacts with SKAP1. Interacts with SKAP2. Interacts with FASLG. Interacts with EVL. Interacts with TMEM47. Interacts with LCK. In terms of processing, T-cell receptor ligation leads to increased tyrosine phosphorylation.

The protein localises to the cytoplasm. The protein resides in the nucleus. Its subcellular location is the cell junction. In terms of biological role, acts as an adapter protein of the FYN and LCP2 signaling cascades in T-cells. May play a role in linking T-cell signaling to remodeling of the actin cytoskeleton. Modulates the expression of IL2. Involved in platelet activation. Prevents the degradation of SKAP1 and SKAP2. May be involved in high affinity immunoglobulin epsilon receptor signaling in mast cells. This chain is FYN-binding protein 1, found in Rattus norvegicus (Rat).